A 428-amino-acid chain; its full sequence is Aspartate--tRNA(Asp) ligase (428 aa).

Residue E170 participates in L-aspartate binding. An aspartate region spans residues 192 to 195 (QLYK). R213 contacts L-aspartate. ATP-binding positions include 213–215 (RAE) and E351. Residues E351 and S354 each contribute to the Mg(2+) site. Residues S354 and R358 each contribute to the L-aspartate site. 399-402 (GFNR) contributes to the ATP binding site.

This sequence belongs to the class-II aminoacyl-tRNA synthetase family. Type 2 subfamily. Homodimer. Mg(2+) serves as cofactor.

The protein resides in the cytoplasm. The enzyme catalyses tRNA(Asp) + L-aspartate + ATP = L-aspartyl-tRNA(Asp) + AMP + diphosphate. Functionally, catalyzes the attachment of L-aspartate to tRNA(Asp) in a two-step reaction: L-aspartate is first activated by ATP to form Asp-AMP and then transferred to the acceptor end of tRNA(Asp). The polypeptide is Aspartate--tRNA(Asp) ligase (Pyrobaculum aerophilum (strain ATCC 51768 / DSM 7523 / JCM 9630 / CIP 104966 / NBRC 100827 / IM2)).